The chain runs to 363 residues: Chalcone synthase B (363 aa).

Residue Cys170 is part of the active site.

This sequence belongs to the thiolase-like superfamily. Chalcone/stilbene synthases family.

It carries out the reaction (E)-4-coumaroyl-CoA + 3 malonyl-CoA + 3 H(+) = 2',4,4',6'-tetrahydroxychalcone + 3 CO2 + 4 CoA. It functions in the pathway secondary metabolite biosynthesis; flavonoid biosynthesis. The primary product of this enzyme is 4,2',4',6'-tetrahydroxychalcone (also termed naringenin-chalcone or chalcone) which can under specific conditions spontaneously isomerize into naringenin. This is Chalcone synthase B (CHSB) from Ipomoea cordatotriloba (Tievine).